The primary structure comprises 62 residues: VNVLGGIEYSINNATLCSVGFSVRVFNYAEGAVRGLTQGNACMGRGDSGGSWFTLFERQYGL.

Serine 48 acts as the Charge relay system in catalysis.

It belongs to the peptidase S1 family. As to quaternary structure, monomer.

The protein localises to the secreted. The enzyme catalyses Preferential cleavage: Ala-|-Xaa, Val-|-Xaa in bacterial cell walls, elastin and other proteins.. Its activity is regulated as follows. Inhibited by phenylmethanesulfonyl fluoride (PMSF) and p-chloromercuribenzoate (PCMB). Its function is as follows. Has bacteriolytic activity. The chain is Alpha-lytic protease L1 from Lysobacter sp. (strain XL1).